The following is a 285-amino-acid chain: Probable endonuclease 4 (285 aa).

Zn(2+) is bound by residues His-69, His-109, Glu-145, Asp-179, His-182, His-216, Asp-229, His-231, and Glu-261.

Belongs to the AP endonuclease 2 family. It depends on Zn(2+) as a cofactor.

It catalyses the reaction Endonucleolytic cleavage to 5'-phosphooligonucleotide end-products.. Its function is as follows. Endonuclease IV plays a role in DNA repair. It cleaves phosphodiester bonds at apurinic or apyrimidinic (AP) sites, generating a 3'-hydroxyl group and a 5'-terminal sugar phosphate. The polypeptide is Probable endonuclease 4 (Escherichia fergusonii (strain ATCC 35469 / DSM 13698 / CCUG 18766 / IAM 14443 / JCM 21226 / LMG 7866 / NBRC 102419 / NCTC 12128 / CDC 0568-73)).